A 65-amino-acid polypeptide reads, in one-letter code: MPAGVSWPRYLRMFAASVLSMFAGAQVVHHYYRPDLSIPEIPPKPGELRTELLGLKERQMDSQKQ.

The Mitochondrial matrix portion of the chain corresponds to 1-9 (MPAGVSWPR). Residues 10-32 (YLRMFAASVLSMFAGAQVVHHYY) traverse the membrane as a helical; Signal-anchor for type II membrane protein segment. Over 33-65 (RPDLSIPEIPPKPGELRTELLGLKERQMDSQKQ) the chain is Mitochondrial intermembrane.

This sequence belongs to the UQCC6 family. As to expression, highly expressed in skeletal and cardiac muscle (at protein level).

The protein resides in the mitochondrion inner membrane. Functionally, required for the assembly and stability of the mitochondrial ubiquinol-cytochrome c reductase complex (complex III (CIII) or cytochrome b-c1 complex), a multisubunit transmembrane complex that is part of the mitochondrial electron transport chain (ETC) which drives oxidative phosphorylation. Mediates early complex III biogenesis. Participates in regulating the levels of electron transport chain proteins, and therefore energy supply, in response to changes in energy demand. Also required for cytochrome c oxidase complex (complex IV) assembly. The protein is Ubiquinol-cytochrome-c reductase complex assembly factor 6 (uqcc6) of Danio rerio (Zebrafish).